The chain runs to 454 residues: Phosphoglucosamine mutase (454 aa).

S104 (phosphoserine intermediate) is an active-site residue. S104, D247, D249, and D251 together coordinate Mg(2+). A Phosphoserine modification is found at S104.

This sequence belongs to the phosphohexose mutase family. It depends on Mg(2+) as a cofactor. Activated by phosphorylation.

It catalyses the reaction alpha-D-glucosamine 1-phosphate = D-glucosamine 6-phosphate. Catalyzes the conversion of glucosamine-6-phosphate to glucosamine-1-phosphate. The protein is Phosphoglucosamine mutase of Bifidobacterium animalis subsp. lactis (strain AD011).